We begin with the raw amino-acid sequence, 134 residues long: Putative capsid protein (134 aa).

In terms of assembly, homodimer.

It localises to the virion. Its function is as follows. Self-assembles to form a helical, filamentous nucleocapsid. The capsid proteins wrap around the DNA and maintain it in an A-form by non-specific desolvation and specific coordination of the DNA phosphate groups by positively charged residues. This certainly protects the viral DNA under conditions such as the extreme desiccation of its host. The protein is Putative capsid protein of Sulfolobus islandicus rod-shaped virus 1 (SIRV-1).